The sequence spans 172 residues: Small ribosomal subunit protein bS6 (172 aa).

The segment at 100–172 (LPAKRVVKTS…ENKEIEKKED (73 aa)) is disordered. Residues 107–172 (KTSEKNVKED…ENKEIEKKED (66 aa)) are compositionally biased toward basic and acidic residues.

It belongs to the bacterial ribosomal protein bS6 family.

Functionally, binds together with bS18 to 16S ribosomal RNA. This Prochlorococcus marinus (strain MIT 9211) protein is Small ribosomal subunit protein bS6.